Here is a 484-residue protein sequence, read N- to C-terminus: NADH-ubiquinone oxidoreductase chain 4 (484 aa).

14 consecutive transmembrane segments (helical) span residues 1-21 (MLTL…PMQG), 33-53 (LALG…GEFD), 77-97 (VDGI…ICIL), 109-129 (YFLM…VVLD), 130-150 (ILLF…IVGI), 162-182 (FLLF…FLVI), 206-226 (LLWL…PFHV), 236-256 (PLAG…YGYM), 270-290 (FSPL…LATL), 295-315 (FKAL…LGLF), 326-346 (LLLS…VGGV), 365-385 (YMPL…AVPL), 405-425 (VFAV…IWLY), and 448-468 (FMLL…PNII).

It belongs to the complex I subunit 4 family.

It is found in the mitochondrion inner membrane. It carries out the reaction a ubiquinone + NADH + 5 H(+)(in) = a ubiquinol + NAD(+) + 4 H(+)(out). In terms of biological role, core subunit of the mitochondrial membrane respiratory chain NADH dehydrogenase (Complex I) that is believed to belong to the minimal assembly required for catalysis. Complex I functions in the transfer of electrons from NADH to the respiratory chain. The immediate electron acceptor for the enzyme is believed to be ubiquinone. The protein is NADH-ubiquinone oxidoreductase chain 4 (ND4) of Mycosarcoma maydis (Corn smut fungus).